We begin with the raw amino-acid sequence, 315 residues long: Homoserine kinase (315 aa).

P97 to T107 contributes to the ATP binding site.

Belongs to the GHMP kinase family. Homoserine kinase subfamily.

The protein resides in the cytoplasm. The enzyme catalyses L-homoserine + ATP = O-phospho-L-homoserine + ADP + H(+). The protein operates within amino-acid biosynthesis; L-threonine biosynthesis; L-threonine from L-aspartate: step 4/5. Functionally, catalyzes the ATP-dependent phosphorylation of L-homoserine to L-homoserine phosphate. In Prochlorococcus marinus (strain MIT 9515), this protein is Homoserine kinase.